A 456-amino-acid polypeptide reads, in one-letter code: tRNA modification GTPase MnmE (456 aa).

Arg24, Glu81, and Lys120 together coordinate (6S)-5-formyl-5,6,7,8-tetrahydrofolate. Positions Gly216–Gly379 constitute a TrmE-type G domain. Residue Asn226 coordinates K(+). Residues Asn226 to Ser231, Thr245 to Thr251, Asp270 to Gly273, Asn335 to Asp338, and Ser359 to Arg361 contribute to the GTP site. Mg(2+) is bound at residue Ser230. K(+) is bound by residues Thr245, Ile247, and Thr250. Thr251 provides a ligand contact to Mg(2+). Lys456 contributes to the (6S)-5-formyl-5,6,7,8-tetrahydrofolate binding site.

Belongs to the TRAFAC class TrmE-Era-EngA-EngB-Septin-like GTPase superfamily. TrmE GTPase family. As to quaternary structure, homodimer. Heterotetramer of two MnmE and two MnmG subunits. Requires K(+) as cofactor.

The protein resides in the cytoplasm. In terms of biological role, exhibits a very high intrinsic GTPase hydrolysis rate. Involved in the addition of a carboxymethylaminomethyl (cmnm) group at the wobble position (U34) of certain tRNAs, forming tRNA-cmnm(5)s(2)U34. The polypeptide is tRNA modification GTPase MnmE (Pseudomonas entomophila (strain L48)).